The following is a 427-amino-acid chain: ATP synthase subunit beta (427 aa).

Residue Gly-160–Thr-167 coordinates ATP.

This sequence belongs to the ATPase alpha/beta chains family. As to quaternary structure, F-type ATPases have 2 components, CF(1) - the catalytic core - and CF(0) - the membrane proton channel. CF(1) has five subunits: alpha(3), beta(3), gamma(1), delta(1), epsilon(1). CF(0) has three main subunits: a(1), b(2) and c(9-12). The alpha and beta chains form an alternating ring which encloses part of the gamma chain. CF(1) is attached to CF(0) by a central stalk formed by the gamma and epsilon chains, while a peripheral stalk is formed by the delta and b chains.

It localises to the cell membrane. It catalyses the reaction ATP + H2O + 4 H(+)(in) = ADP + phosphate + 5 H(+)(out). In terms of biological role, produces ATP from ADP in the presence of a proton gradient across the membrane. The catalytic sites are hosted primarily by the beta subunits. This chain is ATP synthase subunit beta, found in Peptococcus niger.